Consider the following 129-residue polypeptide: Small ribosomal subunit protein uS9 (129 aa).

Belongs to the universal ribosomal protein uS9 family.

The sequence is that of Small ribosomal subunit protein uS9 from Wolinella succinogenes (strain ATCC 29543 / DSM 1740 / CCUG 13145 / JCM 31913 / LMG 7466 / NCTC 11488 / FDC 602W) (Vibrio succinogenes).